The following is a 175-amino-acid chain: Austinoid biosynthesis cluster protein F (175 aa).

It belongs to the trt14 isomerase family. In terms of assembly, homodimer.

Its pathway is secondary metabolite biosynthesis; terpenoid biosynthesis. Its function is as follows. Part of the gene cluster that mediates the biosynthesis of calidodehydroaustin, a fungal meroterpenoid. The first step of the pathway is the synthesis of 3,5-dimethylorsellinic acid by the polyketide synthase ausA. 3,5-dimethylorsellinic acid is then prenylated by the polyprenyl transferase ausN. Further epoxidation by the FAD-dependent monooxygenase ausM and cyclization by the probable terpene cyclase ausL lead to the formation of protoaustinoid A. Protoaustinoid A is then oxidized to spiro-lactone preaustinoid A3 by the combined action of the FAD-binding monooxygenases ausB and ausC, and the dioxygenase ausE. Acid-catalyzed keto-rearrangement and ring contraction of the tetraketide portion of preaustinoid A3 by ausJ lead to the formation of preaustinoid A4. The aldo-keto reductase ausK, with the help of ausH, is involved in the next step by transforming preaustinoid A4 into isoaustinone which is in turn hydroxylated by the P450 monooxygenase ausI to form austinolide. The cytochrome P450 monooxygenase ausG modifies austinolide to austinol. Austinol is further acetylated to austin by the O-acetyltransferase ausP, which spontaneously changes to dehydroaustin. The cytochrome P450 monooxygenase ausR then converts dehydroaustin is into 7-dehydrodehydroaustin. The hydroxylation catalyzed by ausR permits the O-acetyltransferase ausQ to add an additional acetyl group to the molecule, leading to the formation of acetoxydehydroaustin. The short chain dehydrogenase ausT catalyzes the reduction of the double bond present between carbon atoms 1 and 2 to convert 7-dehydrodehydroaustin into 1,2-dihydro-7-hydroxydehydroaustin. AusQ catalyzes not only an acetylation reaction but also the addition of the PKS ausV diketide product to 1,2-dihydro-7-hydroxydehydroaustin, forming precalidodehydroaustin. Finally, the iron/alpha-ketoglutarate-dependent dioxygenase converts precalidodehydroaustin into calidodehydroaustin. The sequence is that of Austinoid biosynthesis cluster protein F from Aspergillus calidoustus.